Consider the following 312-residue polypeptide: Sulfate adenylyltransferase subunit 2 (312 aa).

Belongs to the PAPS reductase family. CysD subfamily. In terms of assembly, heterodimer composed of CysD, the smaller subunit, and CysN.

The enzyme catalyses sulfate + ATP + H(+) = adenosine 5'-phosphosulfate + diphosphate. It functions in the pathway sulfur metabolism; hydrogen sulfide biosynthesis; sulfite from sulfate: step 1/3. Functionally, with CysN forms the ATP sulfurylase (ATPS) that catalyzes the adenylation of sulfate producing adenosine 5'-phosphosulfate (APS) and diphosphate, the first enzymatic step in sulfur assimilation pathway. APS synthesis involves the formation of a high-energy phosphoric-sulfuric acid anhydride bond driven by GTP hydrolysis by CysN coupled to ATP hydrolysis by CysD. The sequence is that of Sulfate adenylyltransferase subunit 2 from Methylobacterium nodulans (strain LMG 21967 / CNCM I-2342 / ORS 2060).